Reading from the N-terminus, the 259-residue chain is Type III pantothenate kinase (259 aa).

Position 6-13 (6-13 (DVGNTNIV)) interacts with ATP. Substrate-binding positions include Y100 and 107–110 (GADR). D109 acts as the Proton acceptor in catalysis. Residue D129 coordinates K(+). T132 provides a ligand contact to ATP. Residue T184 coordinates substrate.

This sequence belongs to the type III pantothenate kinase family. As to quaternary structure, homodimer. NH4(+) is required as a cofactor. K(+) serves as cofactor.

It is found in the cytoplasm. It carries out the reaction (R)-pantothenate + ATP = (R)-4'-phosphopantothenate + ADP + H(+). It functions in the pathway cofactor biosynthesis; coenzyme A biosynthesis; CoA from (R)-pantothenate: step 1/5. Its function is as follows. Catalyzes the phosphorylation of pantothenate (Pan), the first step in CoA biosynthesis. The protein is Type III pantothenate kinase of Clostridium kluyveri (strain NBRC 12016).